A 390-amino-acid chain; its full sequence is GTPase Obg (390 aa).

Residues M1 to L159 enclose the Obg domain. The region spanning A160–N333 is the OBG-type G domain. GTP contacts are provided by residues G166–S173, F191–I195, D213–G216, N283–D286, and S314–A316. Mg(2+) is bound by residues S173 and T193. Over residues V364 to V384 the composition is skewed to acidic residues. Residues V364 to R390 are disordered.

This sequence belongs to the TRAFAC class OBG-HflX-like GTPase superfamily. OBG GTPase family. Monomer. Mg(2+) is required as a cofactor.

Its subcellular location is the cytoplasm. An essential GTPase which binds GTP, GDP and possibly (p)ppGpp with moderate affinity, with high nucleotide exchange rates and a fairly low GTP hydrolysis rate. Plays a role in control of the cell cycle, stress response, ribosome biogenesis and in those bacteria that undergo differentiation, in morphogenesis control. This Yersinia pestis protein is GTPase Obg.